The sequence spans 193 residues: Anthranilate synthase component 2 (193 aa).

The region spanning D3 to K193 is the Glutamine amidotransferase type-1 domain. Position 57–59 (G57–G59) interacts with L-glutamine. Catalysis depends on C84, which acts as the Nucleophile; for GATase activity. Residues Q88 and S134–L135 contribute to the L-glutamine site. Catalysis depends on for GATase activity residues H170 and E172.

In terms of assembly, heterotetramer consisting of two non-identical subunits: a beta subunit (TrpG) and a large alpha subunit (TrpE).

The enzyme catalyses chorismate + L-glutamine = anthranilate + pyruvate + L-glutamate + H(+). It participates in amino-acid biosynthesis; L-tryptophan biosynthesis; L-tryptophan from chorismate: step 1/5. Its function is as follows. Part of a heterotetrameric complex that catalyzes the two-step biosynthesis of anthranilate, an intermediate in the biosynthesis of L-tryptophan. In the first step, the glutamine-binding beta subunit (TrpG) of anthranilate synthase (AS) provides the glutamine amidotransferase activity which generates ammonia as a substrate that, along with chorismate, is used in the second step, catalyzed by the large alpha subunit of AS (TrpE) to produce anthranilate. In the absence of TrpG, TrpE can synthesize anthranilate directly from chorismate and high concentrations of ammonia. This is Anthranilate synthase component 2 (trpG) from Serratia marcescens.